The primary structure comprises 248 residues: MAGHSKWANIKHRKERQDAKKGKIFTKLIRELTVAAKQGGGVPADNPRLRLAVDKALTANMTRDTIDRAIARGVGSNDADNMVELSYEGYAPSGVAIIVEAMTDNRNRTAAEVRHAFSKCGGNLGTDGSVAYMFERKGQISFAPGVDEEALMDAALEAGADDVVVNDDGSIDVFTTFADFISVNEALTAAGFKGDEAEVTMIPSTTATLDLETAQKVLKLIDMLEDLDDVQNVYSNADIPDDVMAQLG.

This sequence belongs to the TACO1 family.

Its subcellular location is the cytoplasm. The polypeptide is Probable transcriptional regulatory protein PSPA7_4544 (Pseudomonas paraeruginosa (strain DSM 24068 / PA7) (Pseudomonas aeruginosa (strain PA7))).